We begin with the raw amino-acid sequence, 51 residues long: MRELIRLVSSAGTGHFYTTDKNKRTTPDKIEIKKYDPVVRKHVVYKEAKIK.

It belongs to the bacterial ribosomal protein bL33 family.

The chain is Large ribosomal subunit protein bL33 from Pseudomonas putida (strain ATCC 47054 / DSM 6125 / CFBP 8728 / NCIMB 11950 / KT2440).